A 238-amino-acid polypeptide reads, in one-letter code: Ribonuclease PH (238 aa).

Residues R86 and 124-126 contribute to the phosphate site; that span reads GTR.

The protein belongs to the RNase PH family. As to quaternary structure, homohexameric ring arranged as a trimer of dimers.

The enzyme catalyses tRNA(n+1) + phosphate = tRNA(n) + a ribonucleoside 5'-diphosphate. Functionally, phosphorolytic 3'-5' exoribonuclease that plays an important role in tRNA 3'-end maturation. Removes nucleotide residues following the 3'-CCA terminus of tRNAs; can also add nucleotides to the ends of RNA molecules by using nucleoside diphosphates as substrates, but this may not be physiologically important. Probably plays a role in initiation of 16S rRNA degradation (leading to ribosome degradation) during starvation. The polypeptide is Ribonuclease PH (Vibrio cholerae serotype O1 (strain ATCC 39315 / El Tor Inaba N16961)).